A 210-amino-acid chain; its full sequence is Putative fructokinase-8 (210 aa).

Belongs to the carbohydrate kinase PfkB family.

The catalysed reaction is D-fructose + ATP = D-fructose 6-phosphate + ADP + H(+). Its pathway is glycan biosynthesis; starch biosynthesis. Functionally, may play an important role in maintaining the flux of carbon towards starch formation. This chain is Putative fructokinase-8, found in Arabidopsis thaliana (Mouse-ear cress).